Here is a 354-residue protein sequence, read N- to C-terminus: Guanine nucleotide-binding protein G(i) subunit alpha-1 (354 aa).

Gly2 is lipidated: N-myristoyl glycine. A lipid anchor (S-palmitoyl cysteine) is attached at Cys3. The G-alpha domain occupies 32-354 (REVKLLLLGA…KNNLKDCGLF (323 aa)). Residues 35 to 48 (KLLLLGAGESGKST) are G1 motif. Residues 43-48 (ESGKST), 150-151 (DS), and 175-178 (LRTR) each bind GTP. A Mg(2+)-binding site is contributed by Ser47. Residues 173-181 (DVLRTRVKT) are G2 motif. Thr181 contacts Mg(2+). Positions 196–205 (FKMFDVGGQR) are G3 motif. Residues 200 to 204 (DVGGQ), 269 to 272 (NKKD), and Ala326 contribute to the GTP site. The interval 265–272 (ILFLNKKD) is G4 motif. The tract at residues 324–329 (TCATDT) is G5 motif.

The protein belongs to the G-alpha family. G(i/o/t/z) subfamily. As to quaternary structure, heterotrimeric G proteins are composed of 3 units; alpha, beta and gamma. The alpha chain contains the guanine nucleotide binding site. Part of a spindle orientation complex. Identified in complex with the beta subunit GNB1 and the gamma subunit GNG1. Identified in complex with the beta subunit GNB1 and the gamma subunit GNG2. GTP binding causes dissociation of the heterotrimer, liberating the individual subunits so that they can interact with downstream effector proteins. In terms of processing, myristoylation at Gly-2 is required for membrane anchoring before palmitoylation. Palmitoylation at Cys-3 varies with membrane lipid composition.

It is found in the nucleus. The protein resides in the cytoplasm. It localises to the cell membrane. Its subcellular location is the cytoskeleton. The protein localises to the microtubule organizing center. It is found in the centrosome. The protein resides in the cell cortex. It localises to the membrane. The enzyme catalyses GTP + H2O = GDP + phosphate + H(+). Guanine nucleotide-binding proteins (G proteins) function as transducers downstream of G protein-coupled receptors (GPCRs) in numerous signaling cascades. The alpha chain contains the guanine nucleotide binding site and alternates between an active, GTP-bound state and an inactive, GDP-bound state. Signaling by an activated GPCR promotes GDP release and GTP binding. The alpha subunit has a low GTPase activity that converts bound GTP to GDP, thereby terminating the signal. Both GDP release and GTP hydrolysis are modulated by numerous regulatory proteins. Signaling is mediated via effector proteins, such as adenylate cyclase. Inhibits adenylate cyclase activity, leading to decreased intracellular cAMP levels. Required for cortical dynein-dynactin complex recruitment during metaphase. The protein is Guanine nucleotide-binding protein G(i) subunit alpha-1 (gnai1) of Oryzias latipes (Japanese rice fish).